Here is a 156-residue protein sequence, read N- to C-terminus: Cyanate hydratase (156 aa).

Catalysis depends on residues R96, E99, and S122.

This sequence belongs to the cyanase family.

It catalyses the reaction cyanate + hydrogencarbonate + 3 H(+) = NH4(+) + 2 CO2. Its function is as follows. Catalyzes the reaction of cyanate with bicarbonate to produce ammonia and carbon dioxide. The chain is Cyanate hydratase from Burkholderia vietnamiensis (strain G4 / LMG 22486) (Burkholderia cepacia (strain R1808)).